We begin with the raw amino-acid sequence, 60 residues long: Phycobilisome degradation protein NblA homolog 2 (60 aa).

To Synechococcus PCC 7942 NblA and some, to chloroplast ycf18.

This chain is Phycobilisome degradation protein NblA homolog 2, found in Synechocystis sp. (strain ATCC 27184 / PCC 6803 / Kazusa).